Consider the following 379-residue polypeptide: 2-dehydropantoate 2-reductase (379 aa).

Residues 13 to 18 (GLGAMG) and N119 contribute to the NADP(+) site. N119 serves as a coordination point for substrate. The Proton donor role is filled by K224. Positions 228, 232, and 316 each coordinate substrate. E328 lines the NADP(+) pocket.

It belongs to the ketopantoate reductase family.

The enzyme catalyses (R)-pantoate + NADP(+) = 2-dehydropantoate + NADPH + H(+). It functions in the pathway cofactor biosynthesis; (R)-pantothenate biosynthesis; (R)-pantoate from 3-methyl-2-oxobutanoate: step 2/2. In terms of biological role, catalyzes the NADPH-dependent reduction of ketopantoate into pantoic acid. The polypeptide is 2-dehydropantoate 2-reductase (PAN5) (Saccharomyces cerevisiae (strain ATCC 204508 / S288c) (Baker's yeast)).